The following is a 102-amino-acid chain: MSIYVGNLSYEVTQDTLSAVFAEYGTVKRVQLPTDRETGQPRGFGFVEMGSEAEEAAAIEALDGAEWMGRDLKVNKAKPREDRGPSGGNRGGYGGGGGRNRY.

The RRM domain occupies 2–79 (SIYVGNLSYE…RDLKVNKAKP (78 aa)). A compositionally biased stretch (basic and acidic residues) spans 73–84 (KVNKAKPREDRG). The segment at 73–102 (KVNKAKPREDRGPSGGNRGGYGGGGGRNRY) is disordered. The segment covering 85 to 102 (PSGGNRGGYGGGGGRNRY) has biased composition (gly residues).

In Nostoc sp. (strain PCC 7120 / SAG 25.82 / UTEX 2576), this protein is Putative RNA-binding protein RbpA (rbpA).